Reading from the N-terminus, the 89-residue chain is MALTAEQKATIVNEYGRGENDTGSPEVQVALLSANIDGLQDHFKSNKQDHHSRRGLIRMVNQRRKLLDYLKRKDFERYQSLIQRLGLRR.

The protein belongs to the universal ribosomal protein uS15 family. In terms of assembly, part of the 30S ribosomal subunit. Forms a bridge to the 50S subunit in the 70S ribosome, contacting the 23S rRNA.

Functionally, one of the primary rRNA binding proteins, it binds directly to 16S rRNA where it helps nucleate assembly of the platform of the 30S subunit by binding and bridging several RNA helices of the 16S rRNA. Its function is as follows. Forms an intersubunit bridge (bridge B4) with the 23S rRNA of the 50S subunit in the ribosome. This chain is Small ribosomal subunit protein uS15, found in Chromohalobacter salexigens (strain ATCC BAA-138 / DSM 3043 / CIP 106854 / NCIMB 13768 / 1H11).